We begin with the raw amino-acid sequence, 101 residues long: Putative membrane protein insertion efficiency factor (101 aa).

Belongs to the UPF0161 family.

It localises to the cell membrane. Could be involved in insertion of integral membrane proteins into the membrane. This is Putative membrane protein insertion efficiency factor from Lacticaseibacillus casei (strain BL23) (Lactobacillus casei).